The following is a 677-amino-acid chain: Platelet glycoprotein Ib alpha chain (677 aa).

Residues 1–16 (MHLLLWLLLLARLCRP) form the signal peptide. Positions 17-47 (EFICEVSKVTSQVEVNCDNKGLKALPPGLPG) constitute an LRRNT domain. The Extracellular portion of the chain corresponds to 17 to 564 (EFICEVSKVT…NPDLCCLLPL (548 aa)). Cysteines 20 and 33 form a disulfide. 6 LRR repeats span residues 72 to 93 (RLAQLHLRQSQLTQLQVDGMLP), 94 to 115 (RLETLDVSHNRLKSLPSLGRAL), 117 to 138 (ALTTLDASFNELVALSPGTLDG), 141 to 162 (HLHELYLRGNKLKTLPPRLLAP), 165 to 186 (QLRKLNLADNRLTELPPGFLEG), and 189 to 210 (ELDTLYLQGNWLRTVPKGFFGD). Residues 221 to 282 (NPWSCDCEIL…HTYQGKDCPS (62 aa)) enclose the LRRCT domain. 2 cysteine pairs are disulfide-bonded: Cys-225–Cys-264 and Cys-227–Cys-280. 2 positions are modified to sulfotyrosine: Tyr-291 and Tyr-294. O-linked (GalNAc...) threonine glycans are attached at residues Thr-309, Thr-319, Thr-323, Thr-324, Thr-346, Thr-354, Thr-368, Thr-372, Thr-376, Thr-377, and Thr-399. A disordered region spans residues 359 to 499 (TLGPIMPTTT…EPTTTPTSPT (141 aa)). Low complexity-rich tracts occupy residues 362-385 (PIMPTTTPEPTTPPTTLEPTTTPT), 393-403 (PTTLEPTTTPI), 411-421 (PTTLEPTTTPI), and 427-470 (TPST…TPTI). The span at 471–485 (PELPTPPTTPEPTMP) shows a compositional bias: pro residues. Positions 486–499 (PTTLEPTTTPTSPT) are enriched in low complexity. Residue Thr-487 is glycosylated (O-linked (GalNAc...) threonine). Residue Ser-497 is glycosylated (O-linked (GalNAc...) serine). The O-linked (GalNAc...) threonine glycan is linked to Thr-500. The O-linked (GalNAc...) serine glycan is linked to Ser-523. The helical transmembrane segment at 565 to 585 (GFYILGLLWLLFASVVLILLL) threads the bilayer. Residues 586–677 (TWAQHVKPQA…VGVRYSSHSL (92 aa)) are Cytoplasmic-facing. Residues Ser-654 and Ser-657 each carry the phosphoserine modification.

Two GP-Ib beta are disulfide-linked to one GP-Ib alpha. GP-IX is complexed with the GP-Ib heterodimer via a non covalent linkage. Interacts with FLNB. Interacts with FLNA (via filamin repeats 4, 9, 12, 17, 19, 21, and 23). Post-translationally, O-glycosylated. Glycocalicin is the product of a proteolytic cleavage/shedding, catalyzed by ADAM17, which releases most of the extracellular domain. Binding sites for vWF and thrombin are in this part of the protein.

It is found in the membrane. Functionally, GP-Ib, a surface membrane protein of platelets, participates in the formation of platelet plugs by binding to the A1 domain of vWF, which is already bound to the subendothelium. The sequence is that of Platelet glycoprotein Ib alpha chain (GP1BA) from Canis lupus familiaris (Dog).